A 103-amino-acid chain; its full sequence is uncharacterized protein (103 aa).

An N-terminal signal peptide occupies residues 1 to 21 (MTGFKVSSFFYILALSRFFNA).

This is an uncharacterized protein from Saccharomyces cerevisiae (strain ATCC 204508 / S288c) (Baker's yeast).